We begin with the raw amino-acid sequence, 340 residues long: Uroporphyrinogen decarboxylase (340 aa).

Residues 21-25, Phe-40, Asp-71, Tyr-147, Ser-202, and His-316 each bind substrate; that span reads RQAGR.

This sequence belongs to the uroporphyrinogen decarboxylase family. Homodimer.

The protein localises to the cytoplasm. The enzyme catalyses uroporphyrinogen III + 4 H(+) = coproporphyrinogen III + 4 CO2. It participates in porphyrin-containing compound metabolism; protoporphyrin-IX biosynthesis; coproporphyrinogen-III from 5-aminolevulinate: step 4/4. In terms of biological role, catalyzes the decarboxylation of four acetate groups of uroporphyrinogen-III to yield coproporphyrinogen-III. This is Uroporphyrinogen decarboxylase from Helicobacter hepaticus (strain ATCC 51449 / 3B1).